Reading from the N-terminus, the 295-residue chain is GTPase Era (295 aa).

In terms of domain architecture, Era-type G spans 4 to 171; it reads KSGFVTIIGR…IKQIVSFLPE (168 aa). Residues 12-19 are G1; it reads GRPNVGKS. Residue 12–19 coordinates GTP; sequence GRPNVGKS. Positions 38–42 are G2; it reads QTTRN. The G3 stretch occupies residues 59 to 62; it reads DTPG. Residues 59–63 and 121–124 contribute to the GTP site; these read DTPGI and NKID. The segment at 121-124 is G4; that stretch reads NKID. The tract at residues 150-152 is G5; the sequence is ISA. Residues 202 to 280 enclose the KH type-2 domain; sequence LDQEIPHGIA…FLELWVKVNE (79 aa).

It belongs to the TRAFAC class TrmE-Era-EngA-EngB-Septin-like GTPase superfamily. Era GTPase family. As to quaternary structure, monomer.

Its subcellular location is the cytoplasm. The protein resides in the cell membrane. Its function is as follows. An essential GTPase that binds both GDP and GTP, with rapid nucleotide exchange. Plays a role in 16S rRNA processing and 30S ribosomal subunit biogenesis and possibly also in cell cycle regulation and energy metabolism. This Alkaliphilus metalliredigens (strain QYMF) protein is GTPase Era.